We begin with the raw amino-acid sequence, 581 residues long: Interleukin-22 receptor subunit alpha-1 (581 aa).

A signal peptide spans 1–15 (MRTLLTILAAGSLLA). The Extracellular segment spans residues 16-228 (HITEDTSDLL…VKTLPDRTWT (213 aa)). Fibronectin type-III domains are found at residues 18–115 (TEDT…RFSS) and 141–221 (PTYT…RVKT). The cysteines at positions 71 and 79 are disulfide-linked. The N-linked (GlcNAc...) asparagine glycan is linked to Asn-80. Residues Cys-128 and Cys-217 are joined by a disulfide bond. A helical membrane pass occupies residues 229–249 (YSFSGAFLFSLGFLVAGLCYL). Over 250–581 (SYRYITKPPP…GLALTVQWES (332 aa)) the chain is Cytoplasmic. 2 disordered regions span residues 354-493 (QAAP…SSLK) and 539-563 (PSDE…LESP). A compositionally biased stretch (polar residues) spans 378–389 (TPQAVSETQLPS). A phosphoserine mark is found at Ser-410 and Ser-414. Over residues 440-449 (CSPTGLSLQE) the composition is skewed to polar residues.

It belongs to the type II cytokine receptor family. In terms of assembly, heterodimer with IL10RB and with IL20RB. Interacts with FBXW12; the interaction promotes ubiquitination of IL22RA1. Ubiquitinated.

The protein resides in the cell membrane. Component of the receptor for IL20, IL22 and IL24. Component of IL22 receptor formed by IL22RA1 and IL10RB enabling IL22 signaling via JAK/STAT pathways. IL22 also induces activation of MAPK1/MAPK3 and Akt kinases pathways. Component of one of the receptor for IL20 and IL24 formed by IL22RA1 and IL20RB also signaling through STATs activation. Mediates IL24 antiangiogenic activity as well as IL24 inhibitory effect on endothelial cell tube formation and differentiation. The sequence is that of Interleukin-22 receptor subunit alpha-1 (IL22RA1) from Bos taurus (Bovine).